The following is a 308-amino-acid chain: CD276 antigen homolog (308 aa).

Positions 1–15 (MAALCLLLLLSLAEA) are cleaved as a signal peptide. At 16 to 236 (IDLRVPELPV…VTGQHLSFPP (221 aa)) the chain is on the extracellular side. One can recognise an Ig-like V-type domain in the interval 21-125 (PELPVIGLLD…VQNSSSASVS (105 aa)). 2 disulfide bridges follow: C37/C112 and C155/C210. Residues 135-228 (PTLHLEPSEA…DVTHASLTVT (94 aa)) form the Ig-like C2-type domain. Residues 237 to 257 (LVLWVTVGLSICLLCLLVALA) form a helical membrane-spanning segment. Residues 258-308 (CVCRKHLKQTCEEEQENAGNEEHEENGELKTAMQPLKVTSPGEDDDAECLE) are Cytoplasmic-facing. Positions 270 to 308 (EEQENAGNEEHEENGELKTAMQPLKVTSPGEDDDAECLE) are disordered. The span at 299–308 (GEDDDAECLE) shows a compositional bias: acidic residues.

This sequence belongs to the immunoglobulin superfamily. BTN/MOG family.

The protein resides in the membrane. Its function is as follows. Modulates immune responses. The chain is CD276 antigen homolog (cd276) from Xenopus laevis (African clawed frog).